The primary structure comprises 180 residues: Ribosome maturation factor RimM (180 aa).

Residues 104–177 (PEEFHDHQLV…RVVVDPPGGL (74 aa)) form the PRC barrel domain.

The protein belongs to the RimM family. Binds ribosomal protein uS19.

It is found in the cytoplasm. In terms of biological role, an accessory protein needed during the final step in the assembly of 30S ribosomal subunit, possibly for assembly of the head region. Essential for efficient processing of 16S rRNA. May be needed both before and after RbfA during the maturation of 16S rRNA. It has affinity for free ribosomal 30S subunits but not for 70S ribosomes. In Salinispora tropica (strain ATCC BAA-916 / DSM 44818 / JCM 13857 / NBRC 105044 / CNB-440), this protein is Ribosome maturation factor RimM.